Reading from the N-terminus, the 420-residue chain is Dynein axonemal assembly factor 4 (420 aa).

The 85-residue stretch at 3-87 (LQVSDYSWQQ…KEAAMWETLS (85 aa)) folds into the CS domain. The interval 7 to 103 (DYSWQQTKTA…EMMQRIREKS (97 aa)) is mediates interaction with ESR1 and STUB1. TPR repeat units lie at residues 290–323 (PEWL…NNKM), 324–357 (PLLY…LMPP), and 366–399 (MKAH…DPSN).

In terms of assembly, interacts with ZMYND10. Interacts with STUB1. Interacts with ESR1 and ESR2. Interacts with DNAAF2. Interacts with CCT3, CCT4, CCT5 and CCT8. Interacts with DNAAF6/PIH1D3.

Its subcellular location is the nucleus. The protein localises to the cytoplasm. It localises to the cell projection. It is found in the neuron projection. The protein resides in the dynein axonemal particle. Involved in neuronal migration during development of the cerebral neocortex. May regulate the stability and proteasomal degradation of the estrogen receptors that play an important role in neuronal differentiation, survival and plasticity. Axonemal dynein assembly factor required for ciliary motility. This chain is Dynein axonemal assembly factor 4, found in Pan troglodytes (Chimpanzee).